Consider the following 331-residue polypeptide: PDZ and LIM domain protein 4 (331 aa).

The 84-residue stretch at 1–84 (MPHSVTLRGP…HLTLSVSRPE (84 aa)) folds into the PDZ domain. 3 disordered regions span residues 80–99 (VSRPEGRSWPSTPEDNKAQA), 105–152 (DSEA…GSNS), and 221–243 (AGEGGERPGPGGPRNLKPTASKL). A phosphoserine mark is found at S112, S116, S120, and S135. One can recognise an LIM zinc-binding domain in the interval 254-313 (PECTRCGHGIVGTIVKARDKLYHPECFMCSDCGLNLKQRGYFFLDERLYCESHAKARVKP).

As to quaternary structure, homodimer. Interacts (via C-terminus only or via combined C-terminus and LIM domain, but not LIM domain only) with PTPN13 (via the second or fourth PDZ domains). Found in a complex with PTPN13 and TRIP6. Interacts (via PDZ domain) with ACTN1 and ACTN2 (via C-terminal SDL residues). Interacts (via PDZ domain) with TRIP6 (via the second LIM domain or via the third LIM domain plus C-terminus). Interacts (via LIM domain) with GRIA1 (via C-terminus); this interaction as well as the interaction with alpha-actinin is required for their colocalization in early endosomes. Interacts with PDLIM1. Forms (via LIM domain) a heterodimer with PDLIM3. Interacts directly with SRC (via kinase domain and to a lesser extent the SH2 domain). Phosphorylated on tyrosine residue(s). Can be dephosphorylated by PTPN13.

Its subcellular location is the cytoplasm. The protein resides in the cytoskeleton. It is found in the cell projection. It localises to the dendritic spine. The protein localises to the early endosome membrane. Its subcellular location is the recycling endosome membrane. The protein resides in the nucleus. It is found in the perinuclear region. It localises to the lamellipodium. The protein localises to the synapse. Its subcellular location is the synaptosome. Its function is as follows. Suppresses SRC activation by recognizing and binding to active SRC and facilitating PTPN13-mediated dephosphorylation of SRC 'Tyr-419' leading to its inactivation. Inactivated SRC dissociates from this protein allowing the initiation of a new SRC inactivation cycle. Involved in reorganization of the actin cytoskeleton. In nonmuscle cells, binds to ACTN1 (alpha-actinin-1), increases the affinity of ACTN1 to F-actin (filamentous actin), and promotes formation of actin stress fibers. Involved in regulation of the synaptic AMPA receptor transport in dendritic spines of hippocampal pyramidal neurons directing the receptors toward an insertion at the postsynaptic membrane. Links endosomal surface-internalized GRIA1-containing AMPA receptors to the alpha-actinin/actin cytoskeleton. Increases AMPA receptor-mediated excitatory postsynaptic currents in neurons. The sequence is that of PDZ and LIM domain protein 4 (PDLIM4) from Bos taurus (Bovine).